We begin with the raw amino-acid sequence, 288 residues long: 4-diphosphocytidyl-2-C-methyl-D-erythritol kinase (288 aa).

The active site involves lysine 8. 92 to 102 contributes to the ATP binding site; the sequence is PVAAGMAGGST. Aspartate 134 is a catalytic residue.

This sequence belongs to the GHMP kinase family. IspE subfamily.

It catalyses the reaction 4-CDP-2-C-methyl-D-erythritol + ATP = 4-CDP-2-C-methyl-D-erythritol 2-phosphate + ADP + H(+). The protein operates within isoprenoid biosynthesis; isopentenyl diphosphate biosynthesis via DXP pathway; isopentenyl diphosphate from 1-deoxy-D-xylulose 5-phosphate: step 3/6. Functionally, catalyzes the phosphorylation of the position 2 hydroxy group of 4-diphosphocytidyl-2C-methyl-D-erythritol. The chain is 4-diphosphocytidyl-2-C-methyl-D-erythritol kinase from Clostridium perfringens (strain 13 / Type A).